The following is a 129-amino-acid chain: uncharacterized protein (129 aa).

Belongs to the HesB/IscA family.

This is an uncharacterized protein from Buchnera aphidicola subsp. Schizaphis graminum (strain Sg).